Reading from the N-terminus, the 1167-residue chain is Outer membrane protein SlpA (1167 aa).

An N-terminal signal peptide occupies residues 1-22; sequence MKKSLIALTTALSFGLAAAQTA. At 23-254 the chain is on the periplasmic side; it reads APVSAPQVPA…RIAALERNAF (232 aa). One can recognise an SLH domain in the interval 29–92; the sequence is QVPALTDVPA…DQMRDGETPA (64 aa). The chain crosses the membrane as a beta stranded span at residues 255–268; the sequence is SVKPSLTIGYSVSR. Topologically, residues 269–377 are extracellular; it reads TSRNFDVDRL…RNGFGFNNLA (109 aa). Positions 274, 276, 305, 308, 310, and 381 each coordinate Cu(2+). Residues 378-403 traverse the membrane as a beta stranded segment; that stretch reads RYKEGSTDIGISLGFDTSGQFSQVTS. The Periplasmic segment spans residues 404-416; it reads GTGGSLFSTAGRL. Residues 417-428 traverse the membrane as a beta stranded segment; sequence QVNQIDLNFGLV. Residues 429–471 are Extracellular-facing; the sequence is TGLPSDAYVDTNGNGKKDDGEATGRGTYLGSGGTAAILRDPAG. Asp-438, Asn-442, Lys-444, Asp-446, and Glu-449 together coordinate Fe(3+). Residues 472 to 490 form a beta stranded membrane-spanning segment; the sequence is NVYRPVFFRFKNATTQFSV. The Periplasmic segment spans residues 491 to 494; the sequence is GNNP. The beta stranded transmembrane segment at 495 to 500 threads the bilayer; that stretch reads VIVTLG. Over 501 to 519 the chain is Extracellular; it reads QQQKFYFSDYVFDNNYDGR. Residues Asp-513 and Asn-515 each coordinate Cu(2+). A beta stranded transmembrane segment spans residues 520–528; sequence GDGFTVTVD. Topologically, residues 529–540 are periplasmic; sequence GSNVPVIGAWKP. A beta stranded membrane pass occupies residues 541-549; it reads QIKGVYGSR. Positions 549, 551, 553, and 559 each coordinate Cu(2+). At 550–561 the chain is on the extracellular side; it reads SGLDGTAEAGYG. Residues 562–571 form a beta stranded membrane-spanning segment; that stretch reads VYYRGVRAQI. At 572-577 the chain is on the periplasmic side; sequence TPVGTL. Residues 578–588 form a beta stranded membrane-spanning segment; sequence TAGIHYAQEGR. The Extracellular segment spans residues 589-601; that stretch reads DMFGAAQNTTSTP. Residues 602–615 traverse the membrane as a beta stranded segment; it reads SDVTTYGADLHGKA. Topologically, residues 616–617 are periplasmic; the sequence is FG. Residues 618 to 630 traverse the membrane as a beta stranded segment; that stretch reads VELHSEYATSRVR. Ser-622 is a deinoxanthin binding site. Residues 631 to 638 are Extracellular-facing; sequence PNTANAAV. A beta stranded transmembrane segment spans residues 639–649; that stretch reads QTSNAFYARVA. At 650–670 the chain is on the periplasmic side; the sequence is TRKDNLAFDLNTPAAKFGNDT. The chain crosses the membrane as a beta stranded span at residues 671-682; that stretch reads FGVSLYDLNYRK. Over 683-753 the chain is Extracellular; the sequence is IDAGYNNVAG…GTVVATNTKI (71 aa). Gly-716 contacts Cu(2+). Residues 754-766 form a beta stranded membrane-spanning segment; the sequence is GQMGFGVKAAANL. Residues 767–768 lie on the Periplasmic side of the membrane; that stretch reads GP. A beta stranded transmembrane segment spans residues 769–779; that stretch reads VAIGGYYDTST. Over 780-788 the chain is Extracellular; that stretch reads GANGDNANR. Residues 789 to 798 traverse the membrane as a beta stranded segment; that stretch reads MTEAGGSAKV. Topologically, residues 799–802 are periplasmic; sequence AYSI. Residues 803-814 traverse the membrane as a beta stranded segment; it reads FSLRGTYNTLDS. The Extracellular portion of the chain corresponds to 815 to 831; it reads NRPQIYRDAAGTQIIGD. The beta stranded transmembrane segment at 832 to 843 threads the bilayer; it reads AKVRRYAVQADV. The Periplasmic segment spans residues 844–848; that stretch reads TPGLG. The beta stranded transmembrane segment at 849 to 860 threads the bilayer; the sequence is LFVGAYYRDVNV. Residues 861 to 931 are Extracellular-facing; it reads NGVRSTTDRG…DQSRTATCFT (71 aa). Residues 932-940 form a beta stranded membrane-spanning segment; that stretch reads SYGVEAGHA. Topologically, residues 941–949 are periplasmic; it reads GDNANALVK. Residues 950-960 form a beta stranded membrane-spanning segment; that stretch reads DLFFRVGYSRV. At 961 to 976 the chain is on the extracellular side; that stretch reads YVPTTATATTGDFSGS. The chain crosses the membrane as a beta stranded span at residues 977-988; sequence VTYGDARYDRKV. Over 989-990 the chain is Periplasmic; sequence GV. The chain crosses the membrane as a beta stranded span at residues 991-1002; that stretch reads ANVRLAGSFSTT. Over 1003-1014 the chain is Extracellular; sequence NTQLDSRPAGTR. The chain crosses the membrane as a beta stranded span at residues 1015–1023; the sequence is GAVGLIVRT. Residues 1024-1032 are Periplasmic-facing; it reads DPLENVPFR. A beta stranded membrane pass occupies residues 1033-1046; sequence PQFNGQVGYYTADN. Residues 1047–1052 lie on the Extracellular side of the membrane; the sequence is RVAAGN. The chain crosses the membrane as a beta stranded span at residues 1053–1066; it reads YNANATKYGAGVVL. The Periplasmic segment spans residues 1067–1073; that stretch reads NDFLLPQ. The chain crosses the membrane as a beta stranded span at residues 1074–1086; the sequence is TKIGVRYDGYMAQ. Residues 1087 to 1108 are Extracellular-facing; sequence NRQYTPFDGDGTQGYFSDANNN. A beta stranded membrane pass occupies residues 1109–1122; that stretch reads RRTNLNGVYVEGAY. Over 1123–1124 the chain is Periplasmic; the sequence is QD. Residues 1125-1138 form a beta stranded membrane-spanning segment; that stretch reads LIFSYGTYTLSQKD. Over 1139-1153 the chain is Extracellular; it reads LNGVEYGSGINNGQP. A beta stranded transmembrane segment spans residues 1154–1166; it reads ARGQTFKISYKVN. Position 1167 (Phe-1167) is a topological domain, periplasmic.

Homotrimer. Part of a heterooligomeric complex resulting in the main assembly named S-layer deinoxanthin-binding complex (SDBC) which is composed of six different subunits, namely SlpA, DR_2310, DR_0505, DR_A0283, DR_A0282, and DR_A0281.

The protein localises to the cell envelope. It localises to the cell outer membrane. It carries out the reaction L-arginine(in) = L-arginine(out). The enzyme catalyses L-lysine(in) = L-lysine(out). The catalysed reaction is L-glutamate(out) = L-glutamate(in). In terms of biological role, plays an important role in the structural organization and integrity of the cell envelope, bridging the outer membrane to the peptidoglyan layer. Is a highly abundant molecule in the D.radiodurans cell envelope but is not a fundamental component of the S-layer. Binds the carotenoid deinoxanthin, a strong protective antioxidant specific of this bacterium, and could be part of the first lane of defense against UV radiation, especially under desiccation. Appears to be a nonselective channel. Is able to transport charged amino acids such as Lys, Arg and Glu; the large dimension of the pore points toward the physiological importance of the SDBC complex in assisting and allowing the exchange of substances, including nutrients, with the surrounding environment. The polypeptide is Outer membrane protein SlpA (Deinococcus radiodurans (strain ATCC 13939 / DSM 20539 / JCM 16871 / CCUG 27074 / LMG 4051 / NBRC 15346 / NCIMB 9279 / VKM B-1422 / R1)).